A 335-amino-acid chain; its full sequence is HTH-type transcriptional regulator MalR (335 aa).

In terms of domain architecture, HTH lacI-type spans M1–Q55. The segment at residues I3 to N22 is a DNA-binding region (H-T-H motif).

In terms of biological role, repressor of glucanotransferase gene expression. The sequence is that of HTH-type transcriptional regulator MalR from Clostridium butyricum.